A 164-amino-acid polypeptide reads, in one-letter code: Phosphopantetheine adenylyltransferase (164 aa).

S10 provides a ligand contact to substrate. Residues 10-11 (SF) and H18 contribute to the ATP site. Substrate is bound by residues K42, T79, and R93. ATP is bound by residues 94-96 (GLR), E104, and 129-135 (VRPITAS).

Belongs to the bacterial CoaD family. In terms of assembly, homohexamer. The cofactor is Mg(2+).

The protein localises to the cytoplasm. The enzyme catalyses (R)-4'-phosphopantetheine + ATP + H(+) = 3'-dephospho-CoA + diphosphate. Its pathway is cofactor biosynthesis; coenzyme A biosynthesis; CoA from (R)-pantothenate: step 4/5. Functionally, reversibly transfers an adenylyl group from ATP to 4'-phosphopantetheine, yielding dephospho-CoA (dPCoA) and pyrophosphate. This is Phosphopantetheine adenylyltransferase from Bradyrhizobium sp. (strain ORS 278).